We begin with the raw amino-acid sequence, 467 residues long: Ethanolamine-phosphate phospho-lyase homolog 1 (467 aa).

Lys-307 is subject to N6-(pyridoxal phosphate)lysine.

It belongs to the class-III pyridoxal-phosphate-dependent aminotransferase family. It depends on pyridoxal 5'-phosphate as a cofactor.

This is Ethanolamine-phosphate phospho-lyase homolog 1 from Caenorhabditis elegans.